Consider the following 422-residue polypeptide: Roquefortine prenyltransferase roqD (422 aa).

Glu100 is a substrate binding site. Arg113, Lys200, and Tyr202 together coordinate dimethylallyl diphosphate. Tyr204 is a substrate binding site. Dimethylallyl diphosphate-binding residues include Lys268, Tyr270, Tyr353, Tyr416, and Tyr420.

This sequence belongs to the tryptophan dimethylallyltransferase family.

The protein operates within alkaloid biosynthesis. Functionally, roquefortine prenyltransferase; part of the gene cluster that mediates the biosynthesis of the mycotoxins roquefortine C and meleagrin. The first stage is catalyzed by the dipeptide synthase roqA which condenses histidine and tryptophan to produce histidyltryptophanyldiketopiperazine (HTD). HTD is then converted to roquefortine C through two possible pathways. In the first pathway, prenyltransferase roqD transforms HTD to the intermediate roquefortine D, which is in turn converted to roquefortine C by the cytochrome P450 monooxygenase roqR. In the second pathway, HTD is first converted to the intermediate dehydrohistidyltryptophanyldi-ketopiperazine (DHTD) by roqR which is then prenylated by roqD to form roquefortine C. Roquefortine C can be further transformed to meleagrin via three more reactions including oxydation to glandicolin A by roqM, which is further reduced to glandicoline B by roqO. Finally, glandicoline B is converted to meleagrin by the glandicoline B O-methyltransferase roqN. More studies identified further branching and additional metabolites produced by the roquefortine/meleagrin cluster, including roquefortine F, roquefortine L, roquefortine M, roquefortine N and neoxaline. In Penicillium rubens (strain ATCC 28089 / DSM 1075 / NRRL 1951 / Wisconsin 54-1255) (Penicillium chrysogenum), this protein is Roquefortine prenyltransferase roqD.